Here is a 122-residue protein sequence, read N- to C-terminus: UPF0102 protein CPF_1959 (122 aa).

The protein belongs to the UPF0102 family.

The protein is UPF0102 protein CPF_1959 of Clostridium perfringens (strain ATCC 13124 / DSM 756 / JCM 1290 / NCIMB 6125 / NCTC 8237 / Type A).